Reading from the N-terminus, the 473-residue chain is Histone-lysine N-methyltransferase ATXR2 (473 aa).

The region spanning 33–441 is the SET domain; it reads KLITSRRCNG…KNEEVTISYI (409 aa). The MYND-type; degenerate zinc finger occupies 134 to 203; sequence EEQCGGSSSS…DWESSHSLLC (70 aa). 4 residues coordinate Zn(2+): Cys176, Cys180, His199, and Cys203. An S-adenosyl-L-methionine-binding site is contributed by Tyr440.

It belongs to the class V-like SAM-binding methyltransferase superfamily. Histone-lysine methyltransferase family. TRX/MLL subfamily. As to quaternary structure, interacts with JMJ30. Binds to ARF7 and ARF19 in the nucleus.

The protein localises to the nucleus. The enzyme catalyses L-lysyl-[histone] + S-adenosyl-L-methionine = N(6)-methyl-L-lysyl-[histone] + S-adenosyl-L-homocysteine + H(+). In terms of biological role, histone methyltransferase that methylates 'Lys-36' (H3K36me) of histone H3 to produce H3K36me3. Promotes early stages of cellular dedifferentiation through H3K36me3-dependent, and to a lesser degree H3K4me3-dependent, activation of Lateral organ Boundaries-Domain (LBD) (e.g. LBD16 and LBD29) genes. Positive regulator of root organogenesis including lateral root formation as well as adventitious root formation from wounded leaf tissues. Recruited by JMJ30/ARF (e.g. ARF7 and ARF19) complexes to promote the deposition of H3K36me3 and, to a lower extent, H3K4me3 at LBD genes promoters, thus ensuring their stable activation during callus formation on callus-inducing medium (CIM). This chain is Histone-lysine N-methyltransferase ATXR2, found in Arabidopsis thaliana (Mouse-ear cress).